We begin with the raw amino-acid sequence, 424 residues long: S-inosyl-L-homocysteine hydrolase (424 aa).

Substrate-binding residues include D130 and E155. An NAD(+)-binding site is contributed by 156-158; the sequence is TTT. Residues K185 and D189 each coordinate substrate. Residues N190, 219-224, E242, N277, 298-300, and N346 each bind NAD(+); these read GYGWCG and AGH.

It belongs to the adenosylhomocysteinase family. NAD(+) serves as cofactor.

It is found in the cytoplasm. The catalysed reaction is S-inosyl-L-homocysteine + H2O = L-homocysteine + inosine. The protein operates within amino-acid biosynthesis; S-adenosyl-L-methionine biosynthesis. In terms of biological role, catalyzes the hydrolysis of S-inosyl-L-homocysteine (SIH) to L-homocysteine (Hcy) and inosine. Likely functions in a S-adenosyl-L-methionine (SAM) recycling pathway from S-adenosyl-L-homocysteine (SAH) produced from SAM-dependent methylation reactions. Can also catalyze the reverse reaction in vitro, i.e. the synthesis of SIH from Hcy and inosine. The sequence is that of S-inosyl-L-homocysteine hydrolase from Methanopyrus kandleri (strain AV19 / DSM 6324 / JCM 9639 / NBRC 100938).